A 251-amino-acid chain; its full sequence is Flap endonuclease Xni (251 aa).

D104 serves as a coordination point for Mg(2+). One can recognise a 5'-3' exonuclease domain in the interval 160-249; it reads VLPRQLPDYW…IDGNLQQLRL (90 aa). Positions 171, 172, 180, 182, and 185 each coordinate K(+). An interaction with DNA region spans residues 184–189; it reads GIGPKS.

Belongs to the Xni family. It depends on Mg(2+) as a cofactor. Requires K(+) as cofactor.

Its function is as follows. Has flap endonuclease activity. During DNA replication, flap endonucleases cleave the 5'-overhanging flap structure that is generated by displacement synthesis when DNA polymerase encounters the 5'-end of a downstream Okazaki fragment. This is Flap endonuclease Xni from Salmonella typhimurium (strain LT2 / SGSC1412 / ATCC 700720).